We begin with the raw amino-acid sequence, 448 residues long: uncharacterized protein (448 aa).

A uDENN domain is found at 4–155; sequence QAIVLATFDA…SAVNLEFDSL (152 aa). In terms of domain architecture, cDENN spans 183–326; the sequence is LDHLGPAFYC…FKGLSRYLSF (144 aa). The region spanning 328–428 is the dDENN domain; sequence GESSWGLTTY…WQYGKYFWLR (101 aa). A helical transmembrane segment spans residues 425–447; it reads FWLRRVSLIFLASTCFLFILWKL.

It is found in the golgi apparatus membrane. The protein localises to the endoplasmic reticulum membrane. This is an uncharacterized protein from Schizosaccharomyces pombe (strain 972 / ATCC 24843) (Fission yeast).